A 347-amino-acid polypeptide reads, in one-letter code: NADH-ubiquinone oxidoreductase chain 2 (347 aa).

11 helical membrane passes run 3-23 (PPIL…VMTS), 25-45 (HWML…PILM), 59-79 (YFLT…INLL), 96-116 (ILMT…FWVP), 122-142 (ISLS…LSVL), 149-169 (INPN…GWGG), 178-198 (IMAY…LYNP), 201-221 (MFLN…LFMI), 237-257 (APLI…LPPL), 274-294 (EMII…YFYM), and 323-343 (MIFL…TPMI).

Belongs to the complex I subunit 2 family. In terms of assembly, core subunit of respiratory chain NADH dehydrogenase (Complex I) which is composed of 45 different subunits. Interacts with TMEM242.

Its subcellular location is the mitochondrion inner membrane. It carries out the reaction a ubiquinone + NADH + 5 H(+)(in) = a ubiquinol + NAD(+) + 4 H(+)(out). Core subunit of the mitochondrial membrane respiratory chain NADH dehydrogenase (Complex I) which catalyzes electron transfer from NADH through the respiratory chain, using ubiquinone as an electron acceptor. Essential for the catalytic activity and assembly of complex I. The chain is NADH-ubiquinone oxidoreductase chain 2 from Civettictis civetta (African civet).